The chain runs to 98 residues: Large ribosomal subunit protein uL23 (98 aa).

The protein belongs to the universal ribosomal protein uL23 family. In terms of assembly, part of the 50S ribosomal subunit. Contacts protein L29, and trigger factor when it is bound to the ribosome.

Functionally, one of the early assembly proteins it binds 23S rRNA. One of the proteins that surrounds the polypeptide exit tunnel on the outside of the ribosome. Forms the main docking site for trigger factor binding to the ribosome. The sequence is that of Large ribosomal subunit protein uL23 from Rickettsia peacockii (strain Rustic).